Here is a 340-residue protein sequence, read N- to C-terminus: Immunoglobulin-binding protein 1 (340 aa).

The region spanning 47 to 61 is the UIM domain; the sequence is LELLEKAAGMLSQLD. The segment at 99–203 is interaction with PPP2CA; sequence RLDHLQRARE…HLLHLRRWIA (105 aa). Disordered regions lie at residues 223–242 and 291–340; these read DSPREETACHSSLPEKPPMK and SADF…QNMG. Positions 226-291 are interaction with MID1; the sequence is REETACHSSL…PDRGIAKPAS (66 aa). Residue Lys-242 is modified to N6-acetyllysine. The segment covering 292 to 301 has biased composition (low complexity); the sequence is ADFQRAAQQQ. Over residues 302–312 the composition is skewed to acidic residues; that stretch reads EDQEQKDEESE. Residues 313–330 show a composition bias toward basic and acidic residues; that stretch reads EKALHRMREWDDWKDTHP.

This sequence belongs to the IGBP1/TAP42 family. As to quaternary structure, interacts with PPP2CB, and with PP4 and PP6. Interacts with MID2. Interacts with ubiquitin. Interacts with partially folded PPP2CA, but not with the fully active protein. Interacts with MID1. In terms of processing, phosphorylated. Monoubiquitination by MID1 triggers calpain-mediated cleavage and switches IGBP1 activity from protective to destructive. Expressed in spleen, thymus, liver and brain. Ubiquitously expressed in B lineage cell lines.

The protein localises to the cytoplasm. Associated to surface IgM-receptor; may be involved in signal transduction. Involved in regulation of the catalytic activity of the phosphatases PP2A, PP4 and PP6 by protecting their partially folded catalytic subunits from degradative polyubiquitination until they associate with regulatory subunits. The polypeptide is Immunoglobulin-binding protein 1 (Igbp1) (Mus musculus (Mouse)).